A 214-amino-acid chain; its full sequence is Adenylate kinase (214 aa).

10–15 is an ATP binding site; sequence GAGKGT. An NMP region spans residues 30-59; it reads CTGDMLRAAVKAGSELGLKAKEIMDAGKLV. Residues Thr31, Arg36, 57 to 59, 85 to 88, and Gln92 contribute to the AMP site; these read KLV and GFPR. An LID region spans residues 122 to 159; the sequence is GRRVHAASGRVYHIKFNPPKVEDKDDVTGEELTIRKDD. ATP contacts are provided by residues Arg123 and 132-133; that span reads VY. Residues Arg156 and Arg167 each coordinate AMP. Residue Arg200 participates in ATP binding.

This sequence belongs to the adenylate kinase family. In terms of assembly, monomer.

The protein localises to the cytoplasm. The enzyme catalyses AMP + ATP = 2 ADP. Its pathway is purine metabolism; AMP biosynthesis via salvage pathway; AMP from ADP: step 1/1. Functionally, catalyzes the reversible transfer of the terminal phosphate group between ATP and AMP. Plays an important role in cellular energy homeostasis and in adenine nucleotide metabolism. The chain is Adenylate kinase from Yersinia enterocolitica.